The sequence spans 744 residues: 6-phosphofructo-2-kinase/fructose-2,6-bisphosphatase (744 aa).

Disordered stretches follow at residues 1–23 (MGSG…GGQL) and 213–245 (RSLS…DGSP). Gly2 carries the N-myristoyl glycine lipid modification. In terms of domain architecture, CBM20 spans 17–122 (NGGGGQLYVS…GDARLALFRL (106 aa)). Residues 213-232 (RSLSASGSFRNDSTPKAAQR) show a composition bias toward polar residues. A Phosphoserine; by CPK3 modification is found at Ser220. A phosphoserine mark is found at Ser276 and Ser295. Residues 301 to 549 (SLSASSFLID…VFFLVNTHLT (249 aa)) are 6-phosphofructo-2-kinase. Residue Ser303 is modified to Phosphoserine; by CPK3. 349 to 357 (GLPARGKTF) provides a ligand contact to ATP. The beta-D-fructose 6-phosphate site is built by Arg382 and Arg406. Asp431 is an active-site residue. Positions 433 and 439 each coordinate beta-D-fructose 6-phosphate. Cys460 is a catalytic residue. 469-474 (NIRLKI) is an ATP binding site. Residues Arg496 and Tyr500 each contribute to the beta-D-fructose 6-phosphate site. A fructose-2,6-bisphosphatase region spans residues 550 to 744 (PRPILLTRHG…VQEKRYKLMD (195 aa)). Arg557 provides a ligand contact to beta-D-fructose 2,6-bisphosphate. The Tele-phosphohistidine intermediate role is filled by His558. Beta-D-fructose 2,6-bisphosphate contacts are provided by Asn564 and Gly570. Glu630 (proton donor/acceptor) is an active-site residue. Residues Tyr641, Arg655, Lys659, Tyr670, Gln697, and Arg701 each coordinate beta-D-fructose 2,6-bisphosphate. 652 to 655 (YESR) provides a ligand contact to ATP. Residue 697 to 701 (QAVLR) participates in ATP binding.

It in the C-terminal section; belongs to the phosphoglycerate mutase family. As to quaternary structure, interacts with 14-3-3 proteins; these interactions may regulate both nitrate assimilation and sucrose/starch partitioning in leaves during the diurnal cycle. Phosphorylation at Ser-220 and Ser-303 by CPK3 promotes 14-3-3 proteins binding.

It is found in the membrane. Its subcellular location is the cytoplasm. It catalyses the reaction beta-D-fructose 2,6-bisphosphate + H2O = beta-D-fructose 6-phosphate + phosphate. It carries out the reaction beta-D-fructose 6-phosphate + ATP = beta-D-fructose 2,6-bisphosphate + ADP + H(+). 6-phosphofructo-2-kinase activity is activated by pyruvate. 6-phosphofructo-2-kinase activity is inhibited by PPi, phosphoenolpyruvate and 2-phosphoglycerate. Fructose-2,6-bisphosphatase activity is inhibited by pyruvate, fructose 1,6-bisphosphate and 6-phosphogluconate. Its function is as follows. Synthesis and degradation of fructose 2,6-bisphosphate. Regulates carbon partitioning between sucrose versus starch during the diurnal cycle. In Arabidopsis thaliana (Mouse-ear cress), this protein is 6-phosphofructo-2-kinase/fructose-2,6-bisphosphatase (FKFBP).